The primary structure comprises 554 residues: CTP synthase (554 aa).

The interval 1–265 (MTPLIFVTGG…DEIVVNQLKL (265 aa)) is amidoligase domain. CTP is bound at residue serine 13. Serine 13 contacts UTP. 14-19 (SLGKGI) contributes to the ATP binding site. Residues aspartate 71 and glutamate 139 each contribute to the Mg(2+) site. Residues 146-148 (DIE), 186-191 (KTKPTQ), and lysine 222 each bind CTP. UTP contacts are provided by residues 186–191 (KTKPTQ) and lysine 222. One can recognise a Glutamine amidotransferase type-1 domain in the interval 292 to 545 (TIAVVGKYVD…IRAARERKAG (254 aa)). Glycine 353 is a binding site for L-glutamine. The Nucleophile; for glutamine hydrolysis role is filled by cysteine 380. L-glutamine contacts are provided by residues 381-384 (YGMQ), glutamate 404, and arginine 471. Catalysis depends on residues histidine 518 and glutamate 520.

It belongs to the CTP synthase family. Homotetramer.

The catalysed reaction is UTP + L-glutamine + ATP + H2O = CTP + L-glutamate + ADP + phosphate + 2 H(+). It catalyses the reaction L-glutamine + H2O = L-glutamate + NH4(+). It carries out the reaction UTP + NH4(+) + ATP = CTP + ADP + phosphate + 2 H(+). Its pathway is pyrimidine metabolism; CTP biosynthesis via de novo pathway; CTP from UDP: step 2/2. Its activity is regulated as follows. Allosterically activated by GTP, when glutamine is the substrate; GTP has no effect on the reaction when ammonia is the substrate. The allosteric effector GTP functions by stabilizing the protein conformation that binds the tetrahedral intermediate(s) formed during glutamine hydrolysis. Inhibited by the product CTP, via allosteric rather than competitive inhibition. Catalyzes the ATP-dependent amination of UTP to CTP with either L-glutamine or ammonia as the source of nitrogen. Regulates intracellular CTP levels through interactions with the four ribonucleotide triphosphates. This chain is CTP synthase, found in Stenotrophomonas maltophilia (strain K279a).